We begin with the raw amino-acid sequence, 623 residues long: MAHVGGLWLHGCLALAVLVSLVHSQHVFMAPQQALSLLQRARRANSGFFEEMRKGNLERECVEEQCSREEAYEALESPSETDAFWAKYTACESVRKSREKLVECLEGNCAEGLGMNYRGNISVTRSGIECQLWRSRYPHKPEVNSTMYPGADLRENFCRNPDGSITGPWCYTTSPTVRREACSIPVCGQGRVTAELIPRSGGSTVNVSPPLETCVPERGRQYQGRLAVTSHGSPCLAWGSSQAKALSKDQDFNPAVPLVENFCRNPDGDQEGAWCYVAGQPGDFEYCDLDYCEEPVDEEVGDALGENADAAIEGRTTADDFQPFFNEKTFGAGEADCGLRPLFEKSSLEDKTEKELFESYIEGRIVEGSDAEIGLAPWQVMIFRKSPQELLCGASLISDRWVLTAAHCLLYPPWDKNFTENDLLVRIGKHSRTRYERNIEKISMLEKIYIHPRYNWRENLDRDIALLKLRKPITFSDYIHPVCLPDKETATKLLRAGYKGRVTGWGNLKETWTTSASEVQPSVLQVVNLPIVERLVCKASTRIRITDNMFCAGYKPDEGKRGDACEGDSGGPFVMKSPFNNRWYQMGIVSWGEGCDRDGKYGFYTHVFRLKKWMQKVIDRFGG.

An N-terminal signal peptide occupies residues 1–24 (MAHVGGLWLHGCLALAVLVSLVHS). The propeptide occupies 25–43 (QHVFMAPQQALSLLQRARR). Residues 44–90 (ANSGFFEEMRKGNLERECVEEQCSREEAYEALESPSETDAFWAKYTA) form the Gla domain. 4-carboxyglutamate occurs at positions 50, 51, 58, 60, 63, 64, 69, 70, 73, and 76. An intrachain disulfide couples C61 to C66. 11 disulfides stabilise this stretch: C91–C104, C109–C187, C130–C170, C158–C182, C214–C292, C235–C275, C263–C287, C337–C483, C392–C408, C537–C551, and C565–C595. Kringle domains follow at residues 108–187 (NCAE…IPVC) and 213–292 (TCVP…LDYC). 2 N-linked (GlcNAc...) asparagine glycosylation sites follow: N120 and N144. Residues 365–619 (IVEGSDAEIG…LKKWMQKVID (255 aa)) form the Peptidase S1 domain. The active-site Charge relay system is the H407. An N-linked (GlcNAc...) asparagine glycan is attached at N417. Catalysis depends on D463, which acts as the Charge relay system. The tract at residues 552–574 (AGYKPDEGKRGDACEGDSGGPFV) is high affinity receptor-binding region which is also known as the TP508 peptide. The Charge relay system role is filled by S569.

This sequence belongs to the peptidase S1 family. In terms of assembly, heterodimer (named alpha-thrombin) of a light and a heavy chain; disulfide-linked. Forms a heterodimer with SERPINA5. In plasma, interacts (via N-terminus) with alpha-1-microglobulin; this interaction does not prevent the activation of prothrombin to thrombin. The gamma-carboxyglutamyl residues, which bind calcium ions, result from the carboxylation of glutamyl residues by a microsomal enzyme, the vitamin K-dependent carboxylase. The modified residues are necessary for the calcium-dependent interaction with a negatively charged phospholipid surface, which is essential for the conversion of prothrombin to thrombin. In terms of processing, in the penultimate step of the coagulation cascade, prothrombin is converted to thrombin by the prothrombinase complex composed of factor Xa (F10), cofactor Va (F5), and phospholipids. This activation requires factor Xa-catalyzed sequential cleavage at 2 sites, Arg-315 and Arg-364, along 2 possible pathways. In the first pathway, the first cleavage occurs at Arg-315, leading to the formation of the inactive intermediate prethrombin-2. This pathway preferentially occurs on platelets and in the absence of cofactor Va. In the second pathway, the first cleavage occurs at Arg-364, which separates protease domain into 2 chains that remain connected through a disulfide bond and generates the active intermediate meizothrombin. The presence of cofactor Va directs activation along the meizothrombin pathway and greatly accelerates the rate of cleavage at Arg-364, but has a smaller effect on the cleavage of meizothrombin at Arg-315. Meizothrombin accumulates as an intermediate when prothrombinase is assembled on the membrane of red blood cells.

The catalysed reaction is Selective cleavage of Arg-|-Gly bonds in fibrinogen to form fibrin and release fibrinopeptides A and B.. Activity is promoted in the presence of negatively charged surfaces, such as polyphosphate and dextran sulfate. Inhibited by SERPINA5. In terms of biological role, thrombin, which cleaves bonds after Arg and Lys, converts fibrinogen to fibrin and activates factors V, VII, VIII, XIII, and, in complex with thrombomodulin, protein C. Functions in blood homeostasis, inflammation and wound healing. Activates coagulation factor XI (F11); activation is promoted by the contact with negatively charged surfaces. Triggers the production of pro-inflammatory cytokines, such as MCP-1/CCL2 and IL8/CXCL8, in endothelial cells. This Sus scrofa (Pig) protein is Prothrombin (F2).